We begin with the raw amino-acid sequence, 309 residues long: Formate-nitrite transporter (309 aa).

Over 1-19 the chain is Cytoplasmic; sequence MPPNNSKYVLDPVSIKSVC. The helical intramembrane region spans 20-35; it reads GGEESYIRCVEYGKKK. Residues 36–40 lie on the Cytoplasmic side of the membrane; it reads AHYSN. Residues 41–68 form a helical membrane-spanning segment; that stretch reads LNLLAKAILAGMFVGLCAHASGIAGGLF. The Extracellular portion of the chain corresponds to 69 to 79; it reads YYHKLREIVGA. The helical transmembrane segment at 80-100 threads the bilayer; sequence SMSVFVYGFTFPIAFMCIICT. At 101-122 the chain is on the cytoplasmic side; it reads GSDLFTGNTLAVTMALYEKKVK. The helical transmembrane segment at 123–150 threads the bilayer; sequence LLDYLRVMTISLFGNYVGAVSFAFFVSY. The Extracellular portion of the chain corresponds to 151-163; sequence LSGAFTNVHAVEK. Positions 164 to 179 form an intramembrane region, helical; sequence NHFFQFLNDIAEKKVH. The Extracellular portion of the chain corresponds to 180-181; the sequence is HT. The chain crosses the membrane as a helical span at residues 182-206; it reads FVECVSLAVGCNIFVCLAVYFVLTL. The Cytoplasmic segment spans residues 207 to 209; the sequence is KDG. Residues 210-226 form a helical membrane-spanning segment; it reads AGYVFSVFFAVYAFAIA. Residues 227–249 lie on the Extracellular side of the membrane; it reads GYEHIIANIYTLNIALMVNTKIT. A helical membrane pass occupies residues 250–280; the sequence is VYQAYIKNLLPTLLGNYIAGAIVLGLPLYFI. The Cytoplasmic segment spans residues 281–309; the sequence is YKEHYYNFERSKRDNNDAQMKSLSIELRN.

It belongs to the FNT transporter (TC 1.A.16) family. As to quaternary structure, homopentamer.

Its subcellular location is the cell membrane. The protein resides in the vacuole membrane. The catalysed reaction is (S)-lactate(in) + H(+)(in) = (S)-lactate(out) + H(+)(out). It catalyses the reaction formate(in) + H(+)(in) = formate(out) + H(+)(out). The enzyme catalyses pyruvate(out) + H(+)(out) = pyruvate(in) + H(+)(in). It carries out the reaction acetate(out) + H(+)(out) = acetate(in) + H(+)(in). Inhibited by diethylpyrocarbonate (DEPC). Protonophores, such as 2,4-dinitrophenol and carbonylcyanide-3-chlorophenylhydrazone, abolish transport. Inhibited by phloretin, furosemide, alpha-cyano-4-hydroxy-cinnamate and alpha-fluorocinnamate. Inhibited by the Malaria Box compound MMV007839 and its derivatives BH296 and BH267.meta. Inhibited by the Malaria Box compound MMV000972. Inhibited by broad-specificity anion transport inhibitor NPPB. In terms of biological role, monocarboxylate-proton symporter that mediates the efflux of the waste product lactate in the intraerythrocytic parasites; active in acidic-to-neutral pH range. Transports L-lactate. Transports D-lactate, pyruvate, acetate and formate. Essential for asexual growth but dispensable for the development of gametocytes. In Plasmodium falciparum (isolate 3D7), this protein is Formate-nitrite transporter.